A 461-amino-acid chain; its full sequence is MNVRVRGIYTTALTELLGGEYDIVQASPPIQRRFEASFPVAVADATVRTSDDRLGAGIAGTADAVDAVGETLSALGRDTFRWTDPAPRGAVFYGEVTETLGSGAVVDLGTVDGDSVEGFLPYNRVEGYVDEGDSYRVQVASPEPPWGDARPSLATALRIPGGLVELRRGSEGGLSETARMADLLPVDPPEGWTPNWSRAADDASLEAMEAALRRASDRAETVMEAVVDADRDEPGRIVAPQAGAWLLFGRESRFELDEYRRQIETTMPGHHRTKAATTAASAAVDFAEALCEPDGAFPFDVVTRQFGPTEGDDVTISHGKPDGRTISLGRGEVTDRDPEAESITVEREMSGGGTYDAIGVKREAGDIATTTFVEGRWWYPTVYCSADGERRGTYVNICTPLEVFPDTVRYVDLHVDVVKGPDGDVRRVDDDELDAAVEAGEISEPLAERAREVAAAIKKAL.

The S1 motif domain occupies 89–158 (GAVFYGEVTE…ARPSLATALR (70 aa)).

Belongs to the FAU-1 family.

Its function is as follows. Probable RNase involved in rRNA stability through maturation and/or degradation of precursor rRNAs. Binds to RNA in loop regions with AU-rich sequences. The protein is Probable ribonuclease FAU-1 of Natronomonas pharaonis (strain ATCC 35678 / DSM 2160 / CIP 103997 / JCM 8858 / NBRC 14720 / NCIMB 2260 / Gabara) (Halobacterium pharaonis).